We begin with the raw amino-acid sequence, 610 residues long: Zinc metalloproteinase-disintegrin-like BITM06A (610 aa).

Residues 1 to 20 form the signal peptide; that stretch reads MIQVLLVTICLAAFPYQGSS. Residues 21–189 constitute a propeptide that is removed on maturation; the sequence is IILESGNVND…KKASQLVVTA (169 aa). One can recognise a Peptidase M12B domain in the interval 198-394; that stretch reads RYVELFIVVD…ENPQCILNEP (197 aa). Residues Glu-201 and Asp-285 each contribute to the Ca(2+) site. 3 cysteine pairs are disulfide-bonded: Cys-309/Cys-389, Cys-349/Cys-373, and Cys-351/Cys-356. Position 334 (His-334) interacts with Zn(2+). The active site involves Glu-335. Zn(2+)-binding residues include His-338 and His-344. A glycan (N-linked (GlcNAc...) asparagine) is linked at Asn-372. Residues Cys-389, Asn-392, Val-404, Asn-407, Leu-409, Glu-411, Glu-414, and Asp-417 each contribute to the Ca(2+) site. Residues 402–488 form the Disintegrin domain; the sequence is PPVCGNELLE…ECPADVFHKN (87 aa). Cystine bridges form between Cys-405-Cys-434, Cys-416-Cys-429, Cys-418-Cys-424, Cys-428-Cys-451, Cys-442-Cys-448, Cys-447-Cys-473, Cys-460-Cys-480, Cys-467-Cys-499, Cys-492-Cys-504, Cys-511-Cys-561, Cys-526-Cys-572, Cys-539-Cys-549, Cys-556-Cys-598, and Cys-592-Cys-603. Positions 466-468 match the D/ECD-tripeptide motif; sequence ECD. Ca(2+) is bound by residues Asp-468, Pro-469, Glu-471, Asp-483, and Val-484.

The protein belongs to the venom metalloproteinase (M12B) family. P-III subfamily. P-IIIa sub-subfamily. In terms of assembly, monomer. The cofactor is Zn(2+). Expressed by the venom gland.

The protein resides in the secreted. Functionally, snake venom metalloproteinase that impairs hemostasis in the envenomed animal. This chain is Zinc metalloproteinase-disintegrin-like BITM06A, found in Bothrops insularis (Golden lancehead).